Here is a 115-residue protein sequence, read N- to C-terminus: uncharacterized protein (115 aa).

Residues 1–91 enclose the HTH arsR-type domain; sequence MTEYNANSIR…SELEGFKNVS (91 aa). The segment at residues 30–53 is a DNA-binding region (H-T-H motif); the sequence is ASLISHTLLLSYATVLRHLRILND.

In terms of biological role, essential for virus function. This is an uncharacterized protein from Saccharolobus solfataricus (Sulfolobus solfataricus).